Reading from the N-terminus, the 482-residue chain is Sugar transporter ERD6-like 16 (482 aa).

Helical transmembrane passes span 42–62 (LMVL…GSCV), 80–100 (LAEF…GAVM), 117–137 (SACF…ALLL), 142–162 (FFTG…IAEI), 173–193 (TLNQ…GSLI), 197–217 (TLAL…CFIP), 280–300 (VIIG…GIGF), 316–336 (LGTI…TILI), 344–364 (LIMI…TSFL), 382–402 (GVLI…WVIM), 413–433 (IAGS…SYTF), and 443–463 (GTFY…AKMV).

This sequence belongs to the major facilitator superfamily. Sugar transporter (TC 2.A.1.1) family.

Its subcellular location is the membrane. Sugar transporter. The chain is Sugar transporter ERD6-like 16 from Arabidopsis thaliana (Mouse-ear cress).